Consider the following 97-residue polypeptide: Pyrin domain-containing protein 2 (97 aa).

Positions 1-94 (MASSAELDFN…SGRADEHCVM (94 aa)) constitute a Pyrin domain.

As to quaternary structure, interacts with PYCARD/ASC (via pyrin domain). Interacts with NLRP2 (via pyrin domain). In terms of tissue distribution, predominantly expressed in peripheral blood. Weakly expressed in testis.

Its subcellular location is the cytoplasm. The protein localises to the nucleus. Functionally, may play a role in innate immunity by disrupting the interaction between PYCARD and NLRP3, thereby regulating the NLRP3 inflammasome. May also inhibit NF-kappa-B signaling distally by affecting the nuclear accumulation of RELA. The chain is Pyrin domain-containing protein 2 from Homo sapiens (Human).